A 358-amino-acid chain; its full sequence is Biotin synthase (358 aa).

Residues 50-277 (NEVQVSTLCS…KSHVRLSAGR (228 aa)) enclose the Radical SAM core domain. Residues Cys-65, Cys-69, and Cys-72 each coordinate [4Fe-4S] cluster. [2Fe-2S] cluster is bound by residues Cys-109, Cys-140, Cys-200, and Arg-272.

Belongs to the radical SAM superfamily. Biotin synthase family. Homodimer. [4Fe-4S] cluster is required as a cofactor. Requires [2Fe-2S] cluster as cofactor.

The catalysed reaction is (4R,5S)-dethiobiotin + (sulfur carrier)-SH + 2 reduced [2Fe-2S]-[ferredoxin] + 2 S-adenosyl-L-methionine = (sulfur carrier)-H + biotin + 2 5'-deoxyadenosine + 2 L-methionine + 2 oxidized [2Fe-2S]-[ferredoxin]. Its pathway is cofactor biosynthesis; biotin biosynthesis; biotin from 7,8-diaminononanoate: step 2/2. Functionally, catalyzes the conversion of dethiobiotin (DTB) to biotin by the insertion of a sulfur atom into dethiobiotin via a radical-based mechanism. This Cellvibrio japonicus (strain Ueda107) (Pseudomonas fluorescens subsp. cellulosa) protein is Biotin synthase.